Reading from the N-terminus, the 156-residue chain is Small ribosomal subunit protein uS7 (156 aa).

This sequence belongs to the universal ribosomal protein uS7 family. In terms of assembly, part of the 30S ribosomal subunit. Contacts proteins S9 and S11.

In terms of biological role, one of the primary rRNA binding proteins, it binds directly to 16S rRNA where it nucleates assembly of the head domain of the 30S subunit. Is located at the subunit interface close to the decoding center, probably blocks exit of the E-site tRNA. The polypeptide is Small ribosomal subunit protein uS7 (Streptococcus pneumoniae serotype 4 (strain ATCC BAA-334 / TIGR4)).